Here is a 114-residue protein sequence, read N- to C-terminus: PDZK1-interacting protein 1 (114 aa).

Over 1-28 (MSVLSLVVLSLLMALPPASCQQGRGNLQ) the chain is Extracellular. The chain crosses the membrane as a helical span at residues 29–51 (PWMQGLIAVAVFLVLVAIAFAVN). At 52–114 (HFWCQEKPAP…EEGKVCSTPM (63 aa)) the chain is on the cytoplasmic side. S85 is modified (phosphoserine).

This sequence belongs to the PDZK1-interacting protein 1/SMIM24 family. In terms of assembly, forms a heterodimer (via N-terminal transmembrane helix) with SLC5A2/SGLT2 (via TM13); this interaction enhances SLC5A2 transporter activity. Interacts with PDZK1.

It localises to the apical cell membrane. Its function is as follows. Auxiliary protein of electrogenic Na(+)-coupled sugar symporter SLC5A2/SGLT2 and SLC5A1/SGLT1. Essential for the transporter activity of SLC5A2/SGLT2 but not SLC5A1/SGLT1. This chain is PDZK1-interacting protein 1, found in Bos taurus (Bovine).